Consider the following 794-residue polypeptide: DNA ligase (794 aa).

NAD(+) is bound by residues 35 to 39, 84 to 85, and Glu-126; these read DAEYD and SL. Residue Lys-128 is the N6-AMP-lysine intermediate of the active site. The NAD(+) site is built by Arg-149, Glu-186, Lys-302, and Lys-326. Cys-420, Cys-423, Cys-450, and Cys-456 together coordinate Zn(2+). The BRCT domain occupies 711-794; that stretch reads VEGLPLAGQT…KLLDEYGVAH (84 aa).

It belongs to the NAD-dependent DNA ligase family. LigA subfamily. The cofactor is Mg(2+). Requires Mn(2+) as cofactor.

It catalyses the reaction NAD(+) + (deoxyribonucleotide)n-3'-hydroxyl + 5'-phospho-(deoxyribonucleotide)m = (deoxyribonucleotide)n+m + AMP + beta-nicotinamide D-nucleotide.. DNA ligase that catalyzes the formation of phosphodiester linkages between 5'-phosphoryl and 3'-hydroxyl groups in double-stranded DNA using NAD as a coenzyme and as the energy source for the reaction. It is essential for DNA replication and repair of damaged DNA. This chain is DNA ligase, found in Pseudomonas paraeruginosa (strain DSM 24068 / PA7) (Pseudomonas aeruginosa (strain PA7)).